We begin with the raw amino-acid sequence, 718 residues long: Ribosomal RNA large subunit methyltransferase K/L (718 aa).

One can recognise a THUMP domain in the interval 43–154 (TQYRILLWSR…QDELVVSLDL (112 aa)).

The protein belongs to the methyltransferase superfamily. RlmKL family.

The protein localises to the cytoplasm. The enzyme catalyses guanosine(2445) in 23S rRNA + S-adenosyl-L-methionine = N(2)-methylguanosine(2445) in 23S rRNA + S-adenosyl-L-homocysteine + H(+). It carries out the reaction guanosine(2069) in 23S rRNA + S-adenosyl-L-methionine = N(2)-methylguanosine(2069) in 23S rRNA + S-adenosyl-L-homocysteine + H(+). Its function is as follows. Specifically methylates the guanine in position 2445 (m2G2445) and the guanine in position 2069 (m7G2069) of 23S rRNA. The sequence is that of Ribosomal RNA large subunit methyltransferase K/L from Histophilus somni (strain 129Pt) (Haemophilus somnus).